Reading from the N-terminus, the 333-residue chain is 4-hydroxyproline 2-epimerase (333 aa).

The Proton acceptor role is filled by Cys-90. Residues Gly-91–His-92, His-223, and Asp-249 each bind substrate. Cys-253 serves as the catalytic Proton donor. Gly-254–Thr-255 contributes to the substrate binding site.

The protein belongs to the proline racemase family.

The enzyme catalyses trans-4-hydroxy-L-proline = cis-4-hydroxy-D-proline. In terms of biological role, catalyzes the epimerization of trans-4-hydroxy-L-proline (t4LHyp) to cis-4-hydroxy-D-proline (c4DHyp). May be involved in a degradation pathway of t4LHyp, which would allow S.novella to grow on t4LHyp as a sole carbon source. In Ancylobacter novellus (strain ATCC 8093 / DSM 506 / JCM 20403 / CCM 1077 / IAM 12100 / NBRC 12443 / NCIMB 10456) (Starkeya novella), this protein is 4-hydroxyproline 2-epimerase.